A 33-amino-acid chain; its full sequence is Brevinin-2PTd (33 aa).

C27 and C33 are disulfide-bonded.

As to expression, expressed by the skin glands.

It is found in the secreted. Its function is as follows. Has antibacterial activity against the Gram-positive bacterium S.aureus ATCC 25923 and the Gram-negative bacterium E.coli ATCC 25726. This is Brevinin-2PTd from Pulchrana picturata (Malaysian fire frog).